A 304-amino-acid polypeptide reads, in one-letter code: Rhomboid-like protein 19 (304 aa).

The next 6 membrane-spanning stretches (helical) occupy residues 23-43 (LVVG…LALI), 58-78 (GYFE…LFMG), 93-113 (FIFV…IALY), 120-140 (VYLY…LVGI), 158-175 (WLPS…FFTL), and 179-198 (AYLP…LRYL). Residues 247 to 304 (SEDHDYSTSGAPLPGSDSAEASRRRERGARALEERLGTERLVPARNKDELQSDGLDNV) are disordered. Over residues 266–284 (EASRRRERGARALEERLGT) the composition is skewed to basic and acidic residues.

Belongs to the peptidase S54 family.

The protein localises to the membrane. Its function is as follows. Probable rhomboid-type serine protease that catalyzes intramembrane proteolysis. The protein is Rhomboid-like protein 19 of Arabidopsis thaliana (Mouse-ear cress).